We begin with the raw amino-acid sequence, 42 residues long: Tachystatin-B1 (42 aa).

3 disulfides stabilise this stretch: Cys-4–Cys-20, Cys-11–Cys-25, and Cys-19–Cys-37.

In terms of tissue distribution, granular hemocytes, small secretory granules.

It localises to the secreted. Functionally, exhibits stronger antimicrobial activity against the Gram-positive bacteria (S.aureus (IC(50) is 7.4 ug/ml)) and fungi (C.albicans (IC(50) is 3.0 ug/ml) and P.pastoris (IC(50) is 0.1 ug/ml)) than Gram-negative bacteria (E.coli no inhibition at 100 ug/ml). Binds to chitin (4.3 uM are required to obtain 50% of binding). Does not cause hemolysis on sheep erythrocytes. Has no blocking activity on the P-type calcium channel. This chain is Tachystatin-B1, found in Tachypleus tridentatus (Japanese horseshoe crab).